A 445-amino-acid chain; its full sequence is tRNA modification GTPase MnmE (445 aa).

Residues R20, E79, and K119 each coordinate (6S)-5-formyl-5,6,7,8-tetrahydrofolate. The TrmE-type G domain occupies 215-371; that stretch reads GLKLAIIGPP…ILKNIENIAE (157 aa). Position 225 (N225) interacts with K(+). GTP contacts are provided by residues 225–230, 244–250, and 269–272; these read NAGKSS, SNIAGTT, and DTAG. S229 contributes to the Mg(2+) binding site. 3 residues coordinate K(+): S244, I246, and T249. T250 lines the Mg(2+) pocket. K445 is a (6S)-5-formyl-5,6,7,8-tetrahydrofolate binding site.

It belongs to the TRAFAC class TrmE-Era-EngA-EngB-Septin-like GTPase superfamily. TrmE GTPase family. As to quaternary structure, homodimer. Heterotetramer of two MnmE and two MnmG subunits. It depends on K(+) as a cofactor.

The protein resides in the cytoplasm. Exhibits a very high intrinsic GTPase hydrolysis rate. Involved in the addition of a carboxymethylaminomethyl (cmnm) group at the wobble position (U34) of certain tRNAs, forming tRNA-cmnm(5)s(2)U34. This chain is tRNA modification GTPase MnmE, found in Rickettsia canadensis (strain McKiel).